Reading from the N-terminus, the 497-residue chain is Iron-sulfur cluster assembly factor IBA57, mitochondrial (497 aa).

A mitochondrion-targeting transit peptide spans 1–27 (MFISRRCRIKGFTLKNLLWFRSSSTRF). A disordered region spans residues 414–433 (PTLNPFTNKPPERTKRKQRP).

This sequence belongs to the GcvT family. CAF17/IBA57 subfamily. As to quaternary structure, interacts with CCR4, ISA1 and ISA2.

It is found in the mitochondrion matrix. Its function is as follows. Required for lysine and glutamate prototrophy and mitochondrial genome maintenance. Has a role in the maturation of mitochondrial aconitase-type and radical-SAM Fe/S proteins biotin synthase and lipoic acid synthase. The protein is Iron-sulfur cluster assembly factor IBA57, mitochondrial of Saccharomyces cerevisiae (strain ATCC 204508 / S288c) (Baker's yeast).